Consider the following 1119-residue polypeptide: Multiple epidermal growth factor-like domains protein 10 (1119 aa).

The first 22 residues, 1-22, serve as a signal peptide directing secretion; that stretch reads MMSSCGPLLLAVSCCLVALTSS. Over 23–851 the chain is Extracellular; sequence LNLDDPNVCS…ALPMDSYQIG (829 aa). In terms of domain architecture, EMI spans 27–104; that stretch reads DPNVCSHWES…FYESGDICVP (78 aa). 15 disulfide bridges follow: cysteine 31–cysteine 92, cysteine 57–cysteine 66, cysteine 91–cysteine 102, cysteine 102–cysteine 115, cysteine 106–cysteine 121, cysteine 123–cysteine 132, cysteine 145–cysteine 157, cysteine 151–cysteine 164, cysteine 166–cysteine 175, cysteine 188–cysteine 200, cysteine 194–cysteine 207, cysteine 209–cysteine 218, cysteine 231–cysteine 243, cysteine 237–cysteine 250, and cysteine 252–cysteine 260. EGF-like domains follow at residues 98–133, 141–176, 184–219, and 227–261; these read SGDI…ADCS, WGPH…WRCE, YGNN…AFCE, and HGQQ…MVCG. An N-linked (GlcNAc...) asparagine glycan is attached at asparagine 197. Residue asparagine 272 is glycosylated (N-linked (GlcNAc...) asparagine). EGF-like domains lie at 274 to 304 and 312 to 347; these read SQEC…ERCQ and YGIG…ESCE. Intrachain disulfides connect cysteine 277–cysteine 285, cysteine 279–cysteine 292, cysteine 294–cysteine 303, cysteine 316–cysteine 328, cysteine 322–cysteine 335, and cysteine 337–cysteine 346. Asparagine 369 and asparagine 393 each carry an N-linked (GlcNAc...) asparagine glycan. EGF-like domains lie at 401-436, 444-479, 487-522, 573-608, 616-653, 666-696, 709-739, 747-782, and 795-825; these read YGEA…SDCA, YGIN…VDCS, WGLG…DRCD, WGPN…TTCQ, FGHR…ALCN, GGSC…SDCS, IHTC…LYCT, YGKD…RHCE, and RQVC…TRCD. 3 cysteine pairs are disulfide-bonded: cysteine 405-cysteine 417, cysteine 411-cysteine 424, and cysteine 426-cysteine 435. Residue asparagine 447 is glycosylated (N-linked (GlcNAc...) asparagine). Cystine bridges form between cysteine 448-cysteine 460, cysteine 454-cysteine 467, cysteine 469-cysteine 478, cysteine 491-cysteine 503, cysteine 497-cysteine 510, and cysteine 512-cysteine 521. An N-linked (GlcNAc...) asparagine glycan is attached at asparagine 492. Asparagine 576 carries N-linked (GlcNAc...) asparagine glycosylation. Intrachain disulfides connect cysteine 577–cysteine 589, cysteine 583–cysteine 596, cysteine 598–cysteine 607, cysteine 620–cysteine 634, cysteine 624–cysteine 641, cysteine 643–cysteine 652, cysteine 669–cysteine 677, cysteine 671–cysteine 684, cysteine 686–cysteine 695, cysteine 712–cysteine 720, cysteine 714–cysteine 727, cysteine 729–cysteine 738, cysteine 751–cysteine 763, cysteine 757–cysteine 770, cysteine 772–cysteine 781, cysteine 798–cysteine 806, cysteine 800–cysteine 813, and cysteine 815–cysteine 824. An N-linked (GlcNAc...) asparagine glycan is attached at asparagine 674. An N-linked (GlcNAc...) asparagine glycan is attached at asparagine 803. Residues 852 to 872 form a helical membrane-spanning segment; sequence AITGIIILVLLVLILLLLFII. The Cytoplasmic portion of the chain corresponds to 873-1119; it reads YRKKQKGKES…SSPSPTEDSK (247 aa).

This sequence belongs to the MEGF family.

Its subcellular location is the cell membrane. Functionally, membrane receptor involved in phagocytosis by macrophages and astrocytes of apoptotic cells. Essential factor in the regulation of muscle development including myogenesis. Likely plays a key role in muscle cell proliferation, adhesion and motility. May control the balance between skeletal muscle satellite cells proliferation and differentiation through regulation of the notch signaling pathway. In Danio rerio (Zebrafish), this protein is Multiple epidermal growth factor-like domains protein 10.